The following is a 323-amino-acid chain: Malate dehydrogenase (323 aa).

NAD(+) contacts are provided by residues 20-25 and Asp-44; that span reads GAGRVG. Positions 93 and 99 each coordinate substrate. NAD(+) is bound by residues Asn-106 and 129 to 131; that span reads VTN. 2 residues coordinate substrate: Asn-131 and Arg-162. Catalysis depends on His-186, which acts as the Proton acceptor.

This sequence belongs to the LDH/MDH superfamily. MDH type 3 family.

The enzyme catalyses (S)-malate + NAD(+) = oxaloacetate + NADH + H(+). Catalyzes the reversible oxidation of malate to oxaloacetate. This is Malate dehydrogenase from Nostoc sp. (strain PCC 7120 / SAG 25.82 / UTEX 2576).